Here is a 477-residue protein sequence, read N- to C-terminus: Glycogen synthase (477 aa).

K15 provides a ligand contact to ADP-alpha-D-glucose.

This sequence belongs to the glycosyltransferase 1 family. Bacterial/plant glycogen synthase subfamily.

The enzyme catalyses [(1-&gt;4)-alpha-D-glucosyl](n) + ADP-alpha-D-glucose = [(1-&gt;4)-alpha-D-glucosyl](n+1) + ADP + H(+). Its pathway is glycan biosynthesis; glycogen biosynthesis. In terms of biological role, synthesizes alpha-1,4-glucan chains using ADP-glucose. This Streptococcus pneumoniae serotype 19F (strain G54) protein is Glycogen synthase.